The following is a 299-amino-acid chain: CRISPR-associated endonuclease Cas1 3 (299 aa).

3 residues coordinate Mn(2+): glutamate 143, histidine 210, and aspartate 223.

The protein belongs to the CRISPR-associated endonuclease Cas1 family. As to quaternary structure, homodimer, forms a heterotetramer with a Cas2 homodimer. The cofactor is Mg(2+). Mn(2+) serves as cofactor.

Functionally, CRISPR (clustered regularly interspaced short palindromic repeat), is an adaptive immune system that provides protection against mobile genetic elements (viruses, transposable elements and conjugative plasmids). CRISPR clusters contain spacers, sequences complementary to antecedent mobile elements, and target invading nucleic acids. CRISPR clusters are transcribed and processed into CRISPR RNA (crRNA). Acts as a dsDNA endonuclease. Involved in the integration of spacer DNA into the CRISPR cassette. The chain is CRISPR-associated endonuclease Cas1 3 from Methanospirillum hungatei JF-1 (strain ATCC 27890 / DSM 864 / NBRC 100397 / JF-1).